Here is an 879-residue protein sequence, read N- to C-terminus: Pentatricopeptide repeat-containing protein At1g71210, mitochondrial (879 aa).

Residues 1-44 (MLRCWSVTVERSCEGMLLRRRILSLSASSFRNFTSGNNGDAIPF) constitute a mitochondrion transit peptide. PPR repeat units follow at residues 181-215 (SLRLCDALVVGYAVAGRTDIALQHFGNMRFRGLDL), 216-246 (DSFGYHVLLNALVEEKCFDSFDVIFDQISVR), 250-280 (CAVTHSILVKKFCKQGKLDEAEDYLRALLPN), 285-319 (CGSGLGILVDALCSKRKFQEATKLLDEIKLVGTVN), 320-355 (MDRAYNIWIRALIKAGFLNNPADFLQKISPLEGCEL), 356-390 (EVFRYNSMVFQLLKENNLDGVYDILTEMMVRGVSP), 391-425 (NKKTMNAALCFFCKAGFVDEALELYRSRSEIGFAP), 426-460 (TAMSYNYLIHTLCANESVEQAYDVLKGAIDRGHFL), 461-495 (GGKTFSTLTNALCWKGKPDMARELVIAAAERDLLP), 496-530 (KRIAGCKIISALCDVGKVEDALMINELFNKSGVDT), 531-565 (SFKMFTSLIYGSITLMRGDIAAKLIIRMQEKGYTP), 566-597 (TRSLYRNVIQCVCEMESGEKNFFTTLLKFQLS), 602-636 (KVQAYNLFIEGAGFAGKPKLARLVYDMMDRDGITP), 637-667 (TVASNILMLQSYLKNEKIADALHFFHDLREQ), 671-705 (KKRLYQVMIVGLCKANKLDDAMHFLEEMKGEGLQP), and 706-740 (SIECYEVNIQKLCNEEKYDEAVGLVNEFRKSGRRI).

Belongs to the PPR family. P subfamily.

It localises to the mitochondrion. This is Pentatricopeptide repeat-containing protein At1g71210, mitochondrial from Arabidopsis thaliana (Mouse-ear cress).